A 265-amino-acid chain; its full sequence is Pre-protein VI (265 aa).

Residues 1 to 33 constitute a propeptide that is removed on maturation; it reads MEDINFSSLAPRHGTRPYMGTWNEIGTSQLNGG. The segment at 34-54 is amphipathic alpha-helix essential for membrane lytic activity; that stretch reads AFNWNSIWSGLKNFGSTIKTY. The interval 36 to 53 is involved in endosomal membrane lysis; it reads NWNSIWSGLKNFGSTIKT. The tract at residues 48–74 is interaction with hexon protein; it reads GSTIKTYGTKAWNSQTGQMLRDKLKDQ. The Nuclear export signal signature appears at 67–76; the sequence is LRDKLKDQNF. The segment at 123-155 is disordered; that stretch reads LETVPGSVPTKGEKRPRPDAEETLVTHTTEPPS. Over residues 133–142 the composition is skewed to basic and acidic residues; that stretch reads KGEKRPRPDA. A Nuclear localization signal motif is present at residues 136–140; sequence KRPRP. The residue at position 148 (threonine 148) is a Phosphothreonine; by host. The PPXY motif motif lies at 153-156; the sequence is PPSY. Positions 246–257 match the Nuclear export signal motif; it reads STLNSIVGLGVK. Positions 248 to 254 are interaction with hexon protein; the sequence is LNSIVGL. Residues 255–265 form a binds to importin alpha/beta, involved in hexon nuclear import region; that stretch reads GVKSLKRRRCY. Positions 260–263 match the Nuclear localization signal motif; that stretch reads KRRR.

Belongs to the adenoviridae protein VI family. Interacts with hexon protein; this interaction allows nuclear import of hexon trimers and possibly pre-capsid assembly. Interacts (via C-terminal NLS) with importin alpha/beta. In terms of assembly, interacts (via PPxY motif) with host NEDD4 ubiquitine ligase; this interaction might play a role in virus intracellular transport during entry. Part of a complex composed of the core-capsid bridging protein, the endosome lysis protein VI and the hexon-linking protein VIII; these interactions bridge the virus core to the capsid. Interacts with peripentonal hexons; this interaction stabilizes the capsid by gluing two peripentonal hexons together and joining them with an adjacent group-of-nine hexon. As to quaternary structure, heterodimer with the viral protease; disulfide-linked. Interacts with the viral protease. Ubiquitinated by Nedd4 following partial capsid disassembly; which might play a role in intracellular virus movement during entry. In terms of processing, contains the major nuclear import and export signals. Proteolytically removed during virion maturation. The processing of the C-terminus turns the precursor into a mature viral structural protein and abrogates its ability to promote hexon import and act as a potential chaperone protein.

The protein resides in the host nucleus. It localises to the host cytoplasm. The protein localises to the virion. During virus assembly, promotes hexon trimers nuclear import through nuclear pore complexes via an importin alpha/beta-dependent mechanism. By analogy to herpesviruses capsid assembly, might act as a chaperone to promote the formation of the icosahedral capsid. Its function is as follows. Structural component of the virion that provides increased stability to the particle shell through its interaction with the core-capsid bridging protein and the hexon-linking protein VIII. Fibers shedding during virus entry into host cell allows the endosome lysis protein to be exposed as a membrane-lytic peptide. Exhibits pH-independent membrane fragmentation activity and probably mediates viral rapid escape from host endosome via organellar membrane lysis. It is not clear if it then remains partially associated with the capsid and involved in the intracellular microtubule-dependent transport of capsid to the nucleus, or if it is lost during endosomal penetration. In terms of biological role, cofactor that activates the viral protease. Binds to viral protease in a 1:1 ratio. The sequence is that of Pre-protein VI from Human adenovirus A serotype 12 (HAdV-12).